The primary structure comprises 250 residues: Isoprenyl transferase (250 aa).

Asp27 is an active-site residue. Residue Asp27 coordinates Mg(2+). Substrate-binding positions include 28–31 (GNRR), Trp32, His48, and 76–78 (STE). Asn79 functions as the Proton acceptor in the catalytic mechanism. Substrate contacts are provided by residues Phe80, Arg82, Arg199, and 205-207 (RVS). Glu218 contributes to the Mg(2+) binding site.

This sequence belongs to the UPP synthase family. Homodimer. Mg(2+) is required as a cofactor.

In terms of biological role, catalyzes the condensation of isopentenyl diphosphate (IPP) with allylic pyrophosphates generating different type of terpenoids. The polypeptide is Isoprenyl transferase (Chlamydia caviae (strain ATCC VR-813 / DSM 19441 / 03DC25 / GPIC) (Chlamydophila caviae)).